The chain runs to 338 residues: Ketol-acid reductoisomerase (NADP(+)) (338 aa).

The 181-residue stretch at M1–T181 folds into the KARI N-terminal Rossmann domain. Residues Y24–Q27, R47, S50, S52, and D82–Q85 each bind NADP(+). H107 is an active-site residue. Residue G133 coordinates NADP(+). Residues S182–I327 enclose the KARI C-terminal knotted domain. Mg(2+) contacts are provided by D190, E194, E226, and E230. A substrate-binding site is contributed by S251.

The protein belongs to the ketol-acid reductoisomerase family. Mg(2+) is required as a cofactor.

The enzyme catalyses (2R)-2,3-dihydroxy-3-methylbutanoate + NADP(+) = (2S)-2-acetolactate + NADPH + H(+). The catalysed reaction is (2R,3R)-2,3-dihydroxy-3-methylpentanoate + NADP(+) = (S)-2-ethyl-2-hydroxy-3-oxobutanoate + NADPH + H(+). The protein operates within amino-acid biosynthesis; L-isoleucine biosynthesis; L-isoleucine from 2-oxobutanoate: step 2/4. Its pathway is amino-acid biosynthesis; L-valine biosynthesis; L-valine from pyruvate: step 2/4. Functionally, involved in the biosynthesis of branched-chain amino acids (BCAA). Catalyzes an alkyl-migration followed by a ketol-acid reduction of (S)-2-acetolactate (S2AL) to yield (R)-2,3-dihydroxy-isovalerate. In the isomerase reaction, S2AL is rearranged via a Mg-dependent methyl migration to produce 3-hydroxy-3-methyl-2-ketobutyrate (HMKB). In the reductase reaction, this 2-ketoacid undergoes a metal-dependent reduction by NADPH to yield (R)-2,3-dihydroxy-isovalerate. This is Ketol-acid reductoisomerase (NADP(+)) from Acinetobacter baumannii (strain AB0057).